Reading from the N-terminus, the 417-residue chain is NADH-quinone oxidoreductase subunit D (417 aa).

It belongs to the complex I 49 kDa subunit family. NDH-1 is composed of 14 different subunits. Subunits NuoB, C, D, E, F, and G constitute the peripheral sector of the complex.

The protein resides in the cell inner membrane. The enzyme catalyses a quinone + NADH + 5 H(+)(in) = a quinol + NAD(+) + 4 H(+)(out). Functionally, NDH-1 shuttles electrons from NADH, via FMN and iron-sulfur (Fe-S) centers, to quinones in the respiratory chain. The immediate electron acceptor for the enzyme in this species is believed to be ubiquinone. Couples the redox reaction to proton translocation (for every two electrons transferred, four hydrogen ions are translocated across the cytoplasmic membrane), and thus conserves the redox energy in a proton gradient. The protein is NADH-quinone oxidoreductase subunit D of Coxiella burnetii (strain CbuG_Q212) (Coxiella burnetii (strain Q212)).